Here is a 96-residue protein sequence, read N- to C-terminus: Co-chaperonin GroES (96 aa).

This sequence belongs to the GroES chaperonin family. As to quaternary structure, heptamer of 7 subunits arranged in a ring. Interacts with the chaperonin GroEL.

It localises to the cytoplasm. Its function is as follows. Together with the chaperonin GroEL, plays an essential role in assisting protein folding. The GroEL-GroES system forms a nano-cage that allows encapsulation of the non-native substrate proteins and provides a physical environment optimized to promote and accelerate protein folding. GroES binds to the apical surface of the GroEL ring, thereby capping the opening of the GroEL channel. This is Co-chaperonin GroES from Hydrogenovibrio crunogenus (strain DSM 25203 / XCL-2) (Thiomicrospira crunogena).